Here is a 764-residue protein sequence, read N- to C-terminus: Complement factor B (764 aa).

Positions 1–25 (MGSNLSPQLCLMPFILGLLSGGVTT) are cleaved as a signal peptide. Sushi domains are found at residues 35 to 100 (GSCS…ECRA), 101 to 160 (IHCP…ICDN), and 163 to 220 (GYCS…SCQD). Intrachain disulfides connect Cys37-Cys76, Cys62-Cys98, Cys103-Cys145, Cys131-Cys158, Cys165-Cys205, and Cys191-Cys218. 2 N-linked (GlcNAc...) asparagine glycosylation sites follow: Asn122 and Asn142. One can recognise a VWFA domain in the interval 270-469 (NIYLVLDGSD…NLEDVFYQMI (200 aa)). Mg(2+)-binding residues include Ser278 and Ser280. Residue Asn285 is glycosylated (N-linked (GlcNAc...) asparagine). Residue Thr353 coordinates Mg(2+). Asn378 is a glycosylation site (N-linked (GlcNAc...) asparagine). The 281-residue stretch at 477 to 757 (LCGMVWEHRK…VLPWLKEKLQ (281 aa)) folds into the Peptidase S1 domain. Intrachain disulfides connect Cys478–Cys596, Cys511–Cys527, Cys599–Cys615, Cys656–Cys682, and Cys695–Cys725. Catalysis depends on charge relay system residues His526 and Asp576. The active-site Charge relay system is Ser699.

This sequence belongs to the peptidase S1 family. As to quaternary structure, monomer. Interacts with complement C3b; this interaction is dependent on the presence of Mg(2+). In terms of assembly, catalytic component of the C3 convertase of the alternative complement pathway, also named C3bBb, composed of complement factor B Bb and complement C3b. Catalytic component of the C5 convertase of the alternative complement pathway, also named C3bBb3b, composed of complement factor B Bb and additional molecules of complement C3b. Interacts to CFP; this interaction contributes to the stabilization of the active C3-convertase enzyme complex. It depends on Mg(2+) as a cofactor. Requires Mn(2+) as cofactor. Post-translationally, cleaved by CFD following activation of the alternative complement system, generating Ba and Bb chains. Cleavage and activation takes place when CFB is already associated with complement C3b.

Its subcellular location is the secreted. The protein localises to the cell surface. The catalysed reaction is Cleavage of Arg-|-Ser bond in complement component C3 alpha-chain to yield C3a and C3b, and Arg-|-Xaa bond in complement component C5 alpha-chain to yield C5a and C5b.. Precursor of the catalytic component of the C3 and C5 convertase complexes of the alternative pathway of the complement system, a cascade of proteins that leads to phagocytosis and breakdown of pathogens and signaling that strengthens the adaptive immune system. The alternative complement pathway acts as an amplification loop that enhances other complement pathways (classical, lectin and GZMK) by promoting formation of additional C3 and C5 convertases. CFB is cleaved and activated by CFD to generate Ba and Bb chains; Bb chain constituting the catalytic component of the C3 and C5 convertases. In terms of biological role, serine protease component of the complement C3 and C5 convertase complexes of the alternative complement pathway. Following cleavage and activation by factor D (CFD), forms the C3 convertase together with complement C3b. As part of the C3 convertase, cleaves and activates C3 into C3a anaphylatoxin and C3b opsonin, the next components of the complement pathways. When an additional complement C3b molecule binds to the C3 convertase, forms the C5 convertase, which cleaves and activates C5 into C5a anaphylatoxin and C5b component of the membrane attack complex. Its function is as follows. Involved in proliferation and differentiation of preactivated B-lymphocytes, rapid spreading of peripheral blood monocytes, stimulation of lymphocyte blastogenesis and lysis of erythrocytes. The polypeptide is Complement factor B (CFB) (Gorilla gorilla gorilla (Western lowland gorilla)).